Consider the following 298-residue polypeptide: Apolipoprotein E (298 aa).

The signal sequence occupies residues 1–18 (MKVLWAALVVTLLAGCRA). A run of 8 repeats spans residues 74–94 (LLIE…EKEL), 95–116 (GPVA…QARL), 117–138 (GADM…QAML), 139–160 (GQSS…RKRL), 161–182 (QRDI…QEGA), 183–203 (ERGV…GRLQ), 204–221 (ALTS…GEQM), and 222–243 (RGRL…REQM). The segment at 95–243 (GPVAEDTKAR…DRLEEVREQM (149 aa)) is 8 X 22 AA approximate tandem repeats. Residue methionine 137 is modified to Methionine sulfoxide. Serine 141 carries the post-translational modification Phosphoserine. The interval 151 to 161 (SHLRKMRKRLQ) is LDL and other lipoprotein receptors binding. 155–158 (KMRK) lines the heparin pocket. The interval 203-271 (QALTSQPLQE…KSWFEPMMED (69 aa)) is lipid-binding and lipoprotein association. 217-224 (WGEQMRGR) contributes to the heparin binding site. The tract at residues 259 to 271 (ARLKSWFEPMMED) is specificity for association with VLDL.

The protein belongs to the apolipoprotein A1/A4/E family. As to quaternary structure, homotetramer. May interact with ABCA1; functionally associated with ABCA1 in the biogenesis of HDLs. May interact with APP/A4 amyloid-beta peptide; the interaction is extremely stable in vitro but its physiological significance is unclear. May interact with MAPT. May interact with MAP2. In the cerebrospinal fluid, interacts with secreted SORL1. Interacts with PMEL; this allows the loading of PMEL luminal fragment on ILVs to induce fibril nucleation. APOE exists as multiple glycosylated and sialylated glycoforms within cells and in plasma. The extent of glycosylation and sialylation are tissue and context specific. Post-translationally, glycated in plasma VLDL. In terms of processing, phosphorylated by FAM20C in the extracellular medium.

The protein localises to the secreted. Its subcellular location is the extracellular space. The protein resides in the extracellular matrix. It is found in the extracellular vesicle. It localises to the endosome. The protein localises to the multivesicular body. Its function is as follows. APOE is an apolipoprotein, a protein associating with lipid particles, that mainly functions in lipoprotein-mediated lipid transport between organs via the plasma and interstitial fluids. APOE is a core component of plasma lipoproteins and is involved in their production, conversion and clearance. Apolipoproteins are amphipathic molecules that interact both with lipids of the lipoprotein particle core and the aqueous environment of the plasma. As such, APOE associates with chylomicrons, chylomicron remnants, very low density lipoproteins (VLDL) and intermediate density lipoproteins (IDL) but shows a preferential binding to high-density lipoproteins (HDL). It also binds a wide range of cellular receptors including the LDL receptor/LDLR, the LDL receptor-related proteins LRP1, LRP2 and LRP8 and the very low-density lipoprotein receptor/VLDLR that mediate the cellular uptake of the APOE-containing lipoprotein particles. Finally, APOE also has a heparin-binding activity and binds heparan-sulfate proteoglycans on the surface of cells, a property that supports the capture and the receptor-mediated uptake of APOE-containing lipoproteins by cells. A main function of APOE is to mediate lipoprotein clearance through the uptake of chylomicrons, VLDLs, and HDLs by hepatocytes. APOE is also involved in the biosynthesis by the liver of VLDLs as well as their uptake by peripheral tissues ensuring the delivery of triglycerides and energy storage in muscle, heart and adipose tissues. By participating in the lipoprotein-mediated distribution of lipids among tissues, APOE plays a critical role in plasma and tissues lipid homeostasis. APOE is also involved in two steps of reverse cholesterol transport, the HDLs-mediated transport of cholesterol from peripheral tissues to the liver, and thereby plays an important role in cholesterol homeostasis. First, it is functionally associated with ABCA1 in the biogenesis of HDLs in tissues. Second, it is enriched in circulating HDLs and mediates their uptake by hepatocytes. APOE also plays an important role in lipid transport in the central nervous system, regulating neuron survival and sprouting. This Cavia tschudii (Montane guinea pig) protein is Apolipoprotein E (APOE).